A 345-amino-acid chain; its full sequence is Phosphate acyltransferase (345 aa).

The protein belongs to the PlsX family. As to quaternary structure, homodimer. Probably interacts with PlsY.

It is found in the cytoplasm. It catalyses the reaction a fatty acyl-[ACP] + phosphate = an acyl phosphate + holo-[ACP]. The protein operates within lipid metabolism; phospholipid metabolism. In terms of biological role, catalyzes the reversible formation of acyl-phosphate (acyl-PO(4)) from acyl-[acyl-carrier-protein] (acyl-ACP). This enzyme utilizes acyl-ACP as fatty acyl donor, but not acyl-CoA. The polypeptide is Phosphate acyltransferase (Anaplasma phagocytophilum (strain HZ)).